The following is a 114-amino-acid chain: Large ribosomal subunit protein uL22 (114 aa).

Belongs to the universal ribosomal protein uL22 family. As to quaternary structure, part of the 50S ribosomal subunit.

This protein binds specifically to 23S rRNA; its binding is stimulated by other ribosomal proteins, e.g. L4, L17, and L20. It is important during the early stages of 50S assembly. It makes multiple contacts with different domains of the 23S rRNA in the assembled 50S subunit and ribosome. Functionally, the globular domain of the protein is located near the polypeptide exit tunnel on the outside of the subunit, while an extended beta-hairpin is found that lines the wall of the exit tunnel in the center of the 70S ribosome. The sequence is that of Large ribosomal subunit protein uL22 from Ehrlichia canis (strain Jake).